The sequence spans 336 residues: Phosphate acyltransferase (336 aa).

The protein belongs to the PlsX family. As to quaternary structure, homodimer. Probably interacts with PlsY.

It localises to the cytoplasm. The catalysed reaction is a fatty acyl-[ACP] + phosphate = an acyl phosphate + holo-[ACP]. The protein operates within lipid metabolism; phospholipid metabolism. Catalyzes the reversible formation of acyl-phosphate (acyl-PO(4)) from acyl-[acyl-carrier-protein] (acyl-ACP). This enzyme utilizes acyl-ACP as fatty acyl donor, but not acyl-CoA. This is Phosphate acyltransferase from Pseudomonas fluorescens (strain ATCC BAA-477 / NRRL B-23932 / Pf-5).